A 284-amino-acid polypeptide reads, in one-letter code: Bifunctional protein FolD (284 aa).

Residues 166 to 168 (GSS) and Ile232 contribute to the NADP(+) site.

The protein belongs to the tetrahydrofolate dehydrogenase/cyclohydrolase family. As to quaternary structure, homodimer.

It catalyses the reaction (6R)-5,10-methylene-5,6,7,8-tetrahydrofolate + NADP(+) = (6R)-5,10-methenyltetrahydrofolate + NADPH. The catalysed reaction is (6R)-5,10-methenyltetrahydrofolate + H2O = (6R)-10-formyltetrahydrofolate + H(+). It participates in one-carbon metabolism; tetrahydrofolate interconversion. Functionally, catalyzes the oxidation of 5,10-methylenetetrahydrofolate to 5,10-methenyltetrahydrofolate and then the hydrolysis of 5,10-methenyltetrahydrofolate to 10-formyltetrahydrofolate. The sequence is that of Bifunctional protein FolD from Buchnera aphidicola subsp. Cinara cedri (strain Cc).